The chain runs to 332 residues: MSRILDNELMGDEELVERTLRPQYLQEYIGQDKVKDQLKIFIEAAKLRDEALDHTLLFGPPGLGKTTMAFVIANELGVNLKQTSGPVIEKSGDLVAILNDLEPGDVLFIDEIHRLPMAVEEVLYSAMEDFYIDIMIGSGETSRSVHLDLPPFTLIGATTRAGMLSNPLRARFGITGHMEYYEAGDLTEIVERTAEIFEMAITHEAAKELALRSRGTPRIANRLLKRVRDYAQIMGNGLIDDKITDQALSMLDVDQEGLDYVDQKILKTMIEVYGGGPVGLGTLSVNIAEERETVEDMYEPYLIQKGFVMRTRTGRVATRKAYEHLGYEYMKE.

Residues 1-181 (MSRILDNELM…FGITGHMEYY (181 aa)) form a large ATPase domain (RuvB-L) region. ATP is bound by residues Leu-20, Arg-21, Gly-62, Lys-65, Thr-66, Thr-67, 128-130 (EDF), Arg-171, Tyr-181, and Arg-218. Thr-66 lines the Mg(2+) pocket. Residues 182 to 252 (EAGDLTEIVE…ITDQALSMLD (71 aa)) form a small ATPAse domain (RuvB-S) region. Residues 255–332 (QEGLDYVDQK…EHLGYEYMKE (78 aa)) are head domain (RuvB-H). 4 residues coordinate DNA: Arg-291, Arg-310, Arg-312, and Arg-315.

This sequence belongs to the RuvB family. As to quaternary structure, homohexamer. Forms an RuvA(8)-RuvB(12)-Holliday junction (HJ) complex. HJ DNA is sandwiched between 2 RuvA tetramers; dsDNA enters through RuvA and exits via RuvB. An RuvB hexamer assembles on each DNA strand where it exits the tetramer. Each RuvB hexamer is contacted by two RuvA subunits (via domain III) on 2 adjacent RuvB subunits; this complex drives branch migration. In the full resolvosome a probable DNA-RuvA(4)-RuvB(12)-RuvC(2) complex forms which resolves the HJ.

Its subcellular location is the cytoplasm. The catalysed reaction is ATP + H2O = ADP + phosphate + H(+). In terms of biological role, the RuvA-RuvB-RuvC complex processes Holliday junction (HJ) DNA during genetic recombination and DNA repair, while the RuvA-RuvB complex plays an important role in the rescue of blocked DNA replication forks via replication fork reversal (RFR). RuvA specifically binds to HJ cruciform DNA, conferring on it an open structure. The RuvB hexamer acts as an ATP-dependent pump, pulling dsDNA into and through the RuvAB complex. RuvB forms 2 homohexamers on either side of HJ DNA bound by 1 or 2 RuvA tetramers; 4 subunits per hexamer contact DNA at a time. Coordinated motions by a converter formed by DNA-disengaged RuvB subunits stimulates ATP hydrolysis and nucleotide exchange. Immobilization of the converter enables RuvB to convert the ATP-contained energy into a lever motion, pulling 2 nucleotides of DNA out of the RuvA tetramer per ATP hydrolyzed, thus driving DNA branch migration. The RuvB motors rotate together with the DNA substrate, which together with the progressing nucleotide cycle form the mechanistic basis for DNA recombination by continuous HJ branch migration. Branch migration allows RuvC to scan DNA until it finds its consensus sequence, where it cleaves and resolves cruciform DNA. In Streptococcus sanguinis (strain SK36), this protein is Holliday junction branch migration complex subunit RuvB.